Here is a 99-residue protein sequence, read N- to C-terminus: NADH-quinone oxidoreductase subunit K (99 aa).

The next 3 membrane-spanning stretches (helical) occupy residues 3–23, 28–48, and 59–79; these read PTYYLLLSALLFSIGAVGVLV, IVVFMCVELMLNAVNLTLVTF, and VMAFFVMVVAAAEVVVGLAII.

It belongs to the complex I subunit 4L family. NDH-1 is composed of 14 different subunits. Subunits NuoA, H, J, K, L, M, N constitute the membrane sector of the complex.

The protein resides in the cell membrane. It catalyses the reaction a quinone + NADH + 5 H(+)(in) = a quinol + NAD(+) + 4 H(+)(out). Its function is as follows. NDH-1 shuttles electrons from NADH, via FMN and iron-sulfur (Fe-S) centers, to quinones in the respiratory chain. The immediate electron acceptor for the enzyme in this species is believed to be a menaquinone. Couples the redox reaction to proton translocation (for every two electrons transferred, four hydrogen ions are translocated across the cytoplasmic membrane), and thus conserves the redox energy in a proton gradient. This Saccharopolyspora erythraea (strain ATCC 11635 / DSM 40517 / JCM 4748 / NBRC 13426 / NCIMB 8594 / NRRL 2338) protein is NADH-quinone oxidoreductase subunit K.